Consider the following 268-residue polypeptide: Ribonuclease P protein subunit p30 (268 aa).

Ala-2 is subject to N-acetylalanine. Ser-251 bears the Phosphoserine mark.

The protein belongs to the eukaryotic/archaeal RNase P protein component 3 family. In terms of assembly, component of nuclear RNase P and RNase MRP ribonucleoproteins. RNase P consists of a catalytic RNA moiety and about 10 protein subunits; POP1, POP4, POP5, POP7, RPP14, RPP21, RPP25, RPP30, RPP38 and RPP40. Within the RNase P complex, POP1, POP7 and RPP25 form the 'finger' subcomplex, POP5, RPP14, RPP40 and homodimeric RPP30 form the 'palm' subcomplex, and RPP21, POP4 and RPP38 form the 'wrist' subcomplex. All subunits of the RNase P complex interact with the catalytic RNA. Several subunits of RNase P are also part of the RNase MRP complex. RNase MRP consists of a catalytic RNA moiety and about 8 protein subunits; POP1, POP7, RPP25, RPP30, RPP38, RPP40 and possibly also POP4 and POP5.

The protein resides in the nucleus. Its subcellular location is the nucleolus. Functionally, component of ribonuclease P, a ribonucleoprotein complex that generates mature tRNA molecules by cleaving their 5'-ends. Also a component of the MRP ribonuclease complex, which cleaves pre-rRNA sequences. This Mus musculus (Mouse) protein is Ribonuclease P protein subunit p30 (Rpp30).